Reading from the N-terminus, the 454-residue chain is MDRPHLFSEVHFRRNASNPNQINWTRYWIDCLSSVPWNDISVTGFEYLAKKYGLEVFQDSSKPNEVVLSLAGKIILIDITVPINASPKDINVVLAFANASGEQYNNPVAEKLLKDAIYNCNTPLFEKNVKWLATFDHSSPSVQQSCFQYLDSLSSSLNAIYEAELSLLAQEENVIMHGNGKPLSNYEGQLGLRIVYWKLLDKTYSTQIFMDNLSHESLPHLLFGYNLLNSPPILQSSKINWALENTLTPIPTTMELVFDDINLIIPEQGVKPLLDLLHVHDITIPWPVQNYSHMLGLPSKSTVNYKFINKNQAIQLTGFDVSARSLRHVPFHHPKQIRGILAIVRQYLLLQLILENIKSADLAETAASSSLHLSLYFKEHPIVHAQYQEINKLNNSEQIIIVLSVLSDGRLNVDYMSSGGKELSKQQSHVFQKLIQQTCNIGLAIEVFIKKVVN.

This sequence belongs to the Mediator complex subunit 1 family. In terms of assembly, component of the Mediator complex.

The protein resides in the nucleus. Its function is as follows. Component of the Mediator complex, a coactivator involved in the regulated transcription of nearly all RNA polymerase II-dependent genes. Mediator functions as a bridge to convey information from gene-specific regulatory proteins to the basal RNA polymerase II transcription machinery. Mediator is recruited to promoters by direct interactions with regulatory proteins and serves as a scaffold for the assembly of a functional preinitiation complex with RNA polymerase II and the general transcription factors. In Schizosaccharomyces pombe (strain 972 / ATCC 24843) (Fission yeast), this protein is Mediator of RNA polymerase II transcription subunit 1 (med1).